A 247-amino-acid polypeptide reads, in one-letter code: Methionyl-tRNA formyltransferase (247 aa).

Belongs to the Fmt family.

The catalysed reaction is L-methionyl-tRNA(fMet) + (6R)-10-formyltetrahydrofolate = N-formyl-L-methionyl-tRNA(fMet) + (6S)-5,6,7,8-tetrahydrofolate + H(+). In terms of biological role, attaches a formyl group to the free amino group of methionyl-tRNA(fMet). The formyl group appears to play a dual role in the initiator identity of N-formylmethionyl-tRNA by promoting its recognition by IF2 and preventing the misappropriation of this tRNA by the elongation apparatus. The polypeptide is Methionyl-tRNA formyltransferase (fmt) (Vibrio alginolyticus).